The chain runs to 289 residues: Syntaxin-2 (289 aa).

The Cytoplasmic portion of the chain corresponds to 1–265 (MRDRLPDLTA…KYQSKARRKK (265 aa)). A coiled-coil region spans residues 68–101 (EGKIKEELEDLDKEIKKTANRIRGKLKSIEQSCD). In terms of domain architecture, t-SNARE coiled-coil homology spans 192–254 (LNEIESRHKD…EHAKEETKKA (63 aa)). Residues 266–289 (WIIAAVAVAVIAVLALIIGLSVGK) traverse the membrane as a helical; Anchor for type IV membrane protein segment.

The protein belongs to the syntaxin family. As to quaternary structure, interacts with SYT6 and SYT8; the interaction is Ca(2+)-dependent.

The protein localises to the membrane. Essential for epithelial morphogenesis. May mediate Ca(2+)-regulation of exocytosis acrosomal reaction in sperm. In Mus musculus (Mouse), this protein is Syntaxin-2 (Stx2).